We begin with the raw amino-acid sequence, 1489 residues long: Chromosome partition protein MukB (1489 aa).

Residue 34–41 (GGNGAGKS) participates in ATP binding. Coiled coils occupy residues 326–418 (LEAD…QYNQ), 444–472 (LETF…QTAH), 509–602 (RHLA…QRAP), 780–805 (RAAR…ATLS), 835–919 (EAEI…GNQL), 977–1116 (EMLS…AKAG), and 1209–1266 (VEAI…QNVS). Positions 666–783 (PGGSEDSRLN…TVPIFGRAAR (118 aa)) are flexible hinge.

This sequence belongs to the SMC family. MukB subfamily. Homodimerization via its hinge domain. Binds to DNA via its C-terminal region. Interacts, and probably forms a ternary complex, with MukE and MukF via its C-terminal region. The complex formation is stimulated by calcium or magnesium. Interacts with tubulin-related protein FtsZ.

The protein localises to the cytoplasm. It is found in the nucleoid. Functionally, plays a central role in chromosome condensation, segregation and cell cycle progression. Functions as a homodimer, which is essential for chromosome partition. Involved in negative DNA supercoiling in vivo, and by this means organize and compact chromosomes. May achieve or facilitate chromosome segregation by condensation DNA from both sides of a centrally located replisome during cell division. This is Chromosome partition protein MukB from Citrobacter koseri (strain ATCC BAA-895 / CDC 4225-83 / SGSC4696).